The primary structure comprises 461 residues: Phytase PHO112 (461 aa).

Intrachain disulfides connect C62–C384, C261–C274, and C404–C412. 1D-myo-inositol hexakisphosphate contacts are provided by R72, H73, R76, and S79. H73 (nucleophile) is an active-site residue. 2 N-linked (GlcNAc...) asparagine glycosylation sites follow: N97 and N157. Residue R169 participates in 1D-myo-inositol hexakisphosphate binding. Residues N229 and N248 are each glycosylated (N-linked (GlcNAc...) asparagine). K293 is a 1D-myo-inositol hexakisphosphate binding site. N-linked (GlcNAc...) asparagine glycans are attached at residues N302 and N313. 1D-myo-inositol hexakisphosphate is bound by residues H334 and D335. Residues N437 and N452 are each glycosylated (N-linked (GlcNAc...) asparagine).

This sequence belongs to the histidine acid phosphatase family. Monomer.

It localises to the secreted. The catalysed reaction is 1D-myo-inositol hexakisphosphate + H2O = 1D-myo-inositol 1,2,4,5,6-pentakisphosphate + phosphate. It carries out the reaction 1D-myo-inositol 1,2,4,5,6-pentakisphosphate + H2O = 1D-myo-inositol 1,2,5,6-tetrakisphosphate + phosphate. The enzyme catalyses 1D-myo-inositol 1,2,5,6-tetrakisphosphate + H2O = 1D-myo-inositol 1,2,6-trisphosphate + phosphate. It catalyses the reaction 1D-myo-inositol 1,2,6-trisphosphate + H2O = 1D-myo-inositol 1,2-bisphosphate + phosphate. The catalysed reaction is 1D-myo-inositol 1,2-bisphosphate + H2O = 1D-myo-inositol 2-phosphate + phosphate. In terms of biological role, catalyzes the phosphate monoester hydrolysis of phytic acid (myo-inositol hexakisphosphate), which results in the stepwise formation of myo-inositol pentakis-, tetrakis-, tris-, bis-, and monophosphates, as well as the liberation of inorganic phosphate. Myo-inositol 2-monophosphate is the end product. Responsible of about 25% of the phytase activity. The residual phytase activity might be contributed by other cytosolic or cellular enzymes such as acid phosphatase that also degraded the substrate phytate. Is essential for human tissue damage during infection. The sequence is that of Phytase PHO112 (PHO112) from Candida albicans (strain SC5314 / ATCC MYA-2876) (Yeast).